A 491-amino-acid polypeptide reads, in one-letter code: Protein nucleotidyltransferase YdiU (491 aa).

The ATP site is built by Gly-94, Gly-96, Arg-97, Lys-117, Asp-129, Gly-130, Arg-180, and Arg-187. Residue Asp-256 is the Proton acceptor of the active site. Mg(2+)-binding residues include Asn-257 and Asp-266. Asp-266 is an ATP binding site.

Belongs to the SELO family. It depends on Mg(2+) as a cofactor. Mn(2+) serves as cofactor.

The catalysed reaction is L-seryl-[protein] + ATP = 3-O-(5'-adenylyl)-L-seryl-[protein] + diphosphate. The enzyme catalyses L-threonyl-[protein] + ATP = 3-O-(5'-adenylyl)-L-threonyl-[protein] + diphosphate. It carries out the reaction L-tyrosyl-[protein] + ATP = O-(5'-adenylyl)-L-tyrosyl-[protein] + diphosphate. It catalyses the reaction L-histidyl-[protein] + UTP = N(tele)-(5'-uridylyl)-L-histidyl-[protein] + diphosphate. The catalysed reaction is L-seryl-[protein] + UTP = O-(5'-uridylyl)-L-seryl-[protein] + diphosphate. The enzyme catalyses L-tyrosyl-[protein] + UTP = O-(5'-uridylyl)-L-tyrosyl-[protein] + diphosphate. Its function is as follows. Nucleotidyltransferase involved in the post-translational modification of proteins. It can catalyze the addition of adenosine monophosphate (AMP) or uridine monophosphate (UMP) to a protein, resulting in modifications known as AMPylation and UMPylation. The sequence is that of Protein nucleotidyltransferase YdiU from Clostridium botulinum (strain Alaska E43 / Type E3).